The chain runs to 1418 residues: Ankyrin repeat and fibronectin type-III domain-containing protein 1 (1418 aa).

A disordered region spans residues 119-236 (RDSVCSLPPP…DRGETPSLSE (118 aa)). Positions 144–154 (PENTSINLSQC) are enriched in polar residues. The span at 171-186 (SASPTSSTPLRTTSTP) shows a compositional bias: low complexity. Basic and acidic residues predominate over residues 223 to 236 (LRDHDRGETPSLSE). ANK repeat units follow at residues 419-450 (QSSE…ELDL) and 456-485 (EGLT…KESP). Residues 556–652 (APLMVRLSVT…LSQPPSAVPS (97 aa)) form the Fibronectin type-III domain. The highly conserved peptide sequence stretch occupies residues 893-900 (GLYLGYLK). Disordered stretches follow at residues 1134–1179 (VQKN…EVFL), 1321–1343 (LETP…YRQP), and 1361–1418 (KTSP…SSTL). Residues 1136-1146 (KNDSTSSNTDY) are compositionally biased toward polar residues. The segment covering 1407 to 1418 (NEQVSEILSSTL) has biased composition (polar residues).

Its function is as follows. Required for vestibular-related functions. This Danio rerio (Zebrafish) protein is Ankyrin repeat and fibronectin type-III domain-containing protein 1 (ankfn1).